Consider the following 372-residue polypeptide: tRNA-specific 2-thiouridylase MnmA (372 aa).

ATP-binding positions include 9–16 and Met-35; that span reads GMSGGVDS. The interval 95–97 is interaction with target base in tRNA; the sequence is NPD. The Nucleophile role is filled by Cys-100. Cys-100 and Cys-201 are joined by a disulfide. Gly-124 lines the ATP pocket. The interaction with tRNA stretch occupies residues 151–153; it reads KDQ. Residue Cys-201 is the Cysteine persulfide intermediate of the active site. The interaction with tRNA stretch occupies residues 317–318; that stretch reads RY.

Belongs to the MnmA/TRMU family.

Its subcellular location is the cytoplasm. It catalyses the reaction S-sulfanyl-L-cysteinyl-[protein] + uridine(34) in tRNA + AH2 + ATP = 2-thiouridine(34) in tRNA + L-cysteinyl-[protein] + A + AMP + diphosphate + H(+). Functionally, catalyzes the 2-thiolation of uridine at the wobble position (U34) of tRNA, leading to the formation of s(2)U34. The protein is tRNA-specific 2-thiouridylase MnmA of Herminiimonas arsenicoxydans.